The sequence spans 250 residues: 2,3-bisphosphoglycerate-dependent phosphoglycerate mutase (250 aa).

Substrate is bound by residues 8-15, 21-22, R60, 87-90, K98, 114-115, and 183-184; these read RHGESQWN, TG, ERHY, RR, and GN. H9 (tele-phosphohistidine intermediate) is an active-site residue. Residue E87 is the Proton donor/acceptor of the active site.

This sequence belongs to the phosphoglycerate mutase family. BPG-dependent PGAM subfamily. Homodimer.

The enzyme catalyses (2R)-2-phosphoglycerate = (2R)-3-phosphoglycerate. Its pathway is carbohydrate degradation; glycolysis; pyruvate from D-glyceraldehyde 3-phosphate: step 3/5. Functionally, catalyzes the interconversion of 2-phosphoglycerate and 3-phosphoglycerate. This chain is 2,3-bisphosphoglycerate-dependent phosphoglycerate mutase, found in Bordetella avium (strain 197N).